The primary structure comprises 722 residues: MRREEAIRAVVAGDHPDPFSFLGPHEEAGRRVVRTFLPGAARVRVLSAAGRPLGELERVHPEGFFSGPLSGNGRYRLRVLWEGGGEDELEDPYRFPPVLSDYDLYLFGEGNNHRIYRHLGAHPAEMDGVCGTAFAVWAPNARRVSVVGDFNLWDGRRHPMRNRNGVWEIFLPGVGPGALYKYEIKDAGGSLLPLKADPYGFFAEQYPGTASIVWDLSRHRWEDGEWMERRGSRNAPDAPMAIYEVHLGSWRRRPDGSHLTYRELAEELVPYVAGLGYTHVELLPPMEHPFGGSWGYQPVGLFAPTSRFGPPEDFKHLVDAFHRAGVGVIADWVPAHFPEDAHGLARFDGTHLYEHADPRKGRHPDWGTLIYNYGRNEVRNFLISNALFWLDEYHIDGLRVDAVASMLYLDYSRKEGEWVPNEHGGNENLEAIAFLRRMNEVVYGEAPGAFTVAEESTAWPMVSRPTYMGGLGFGYKWNMGWMHDTLQYMKEDPVHRRYHHDRITFGLLYAFNENFILPLSHDEVVHGKGSLLGRMPGDRWQRFANLRAYYGFMYGHPGKQLLFMGGEFAQEREWDSGSQLDWHLLEGGENRGVRDLVADLNALYRATPALHQVDFEPEGFEWVEGGDAEQSVVSFLRRARNPEDFVLVVSNFTPVVRHGYRVGVPASGPYAEVLNTDDPRYGGSGVANGELEAEEVPWHGRPFSLRLTLPPLATVFLRPRPV.

Catalysis depends on aspartate 401, which acts as the Nucleophile. Glutamate 454 acts as the Proton donor in catalysis.

This sequence belongs to the glycosyl hydrolase 13 family. GlgB subfamily. Monomer.

It catalyses the reaction Transfers a segment of a (1-&gt;4)-alpha-D-glucan chain to a primary hydroxy group in a similar glucan chain.. It functions in the pathway glycan biosynthesis; glycogen biosynthesis. Its function is as follows. Catalyzes the formation of the alpha-1,6-glucosidic linkages in glycogen by scission of a 1,4-alpha-linked oligosaccharide from growing alpha-1,4-glucan chains and the subsequent attachment of the oligosaccharide to the alpha-1,6 position. The protein is 1,4-alpha-glucan branching enzyme GlgB of Rubrobacter xylanophilus (strain DSM 9941 / JCM 11954 / NBRC 16129 / PRD-1).